The chain runs to 240 residues: uncharacterized protein (240 aa).

This is an uncharacterized protein from Acidianus two-tailed virus (ATV).